The primary structure comprises 285 residues: NADPH-dependent 7-cyano-7-deazaguanine reductase (285 aa).

Residue 91-93 participates in substrate binding; it reads IES. 93-94 serves as a coordination point for NADPH; that stretch reads SK. The Thioimide intermediate role is filled by Cys191. Asp198 serves as the catalytic Proton donor. 230–231 provides a ligand contact to substrate; that stretch reads HE. 259–260 is a binding site for NADPH; it reads RG.

The protein belongs to the GTP cyclohydrolase I family. QueF type 2 subfamily. In terms of assembly, homodimer.

The protein localises to the cytoplasm. It carries out the reaction 7-aminomethyl-7-carbaguanine + 2 NADP(+) = 7-cyano-7-deazaguanine + 2 NADPH + 3 H(+). The protein operates within tRNA modification; tRNA-queuosine biosynthesis. Functionally, catalyzes the NADPH-dependent reduction of 7-cyano-7-deazaguanine (preQ0) to 7-aminomethyl-7-deazaguanine (preQ1). This chain is NADPH-dependent 7-cyano-7-deazaguanine reductase, found in Legionella pneumophila (strain Paris).